The sequence spans 384 residues: Substance-K receptor (384 aa).

Residues 1 to 32 (MGGRAIVTDTNIFSGLESNTTGVTAFSMPAWQ) are Extracellular-facing. An N-linked (GlcNAc...) asparagine glycan is attached at asparagine 19. Residues 33–56 (LALWATAYLGLVLVAVTGNATVIW) traverse the membrane as a helical segment. At 57–69 (IILAHERMRTVTN) the chain is on the cytoplasmic side. Residues 70-90 (YFIINLALADLCMAAFNATFN) form a helical membrane-spanning segment. Residues 91–107 (FVYASHNIWYFGRAFCY) are Extracellular-facing. Cysteines 106 and 181 form a disulfide. The chain crosses the membrane as a helical span at residues 108–129 (FQNLFPITAMFVSIYSMTAIAA). Topologically, residues 130-149 (DRYMAIVHPFQPRLSAPITK) are cytoplasmic. The chain crosses the membrane as a helical span at residues 150 to 170 (ATIAGIWLVALALASPQCFYS). Residues 171–196 (TITVDQGATKCVVAWPNDNGGKMLLL) are Extracellular-facing. A helical membrane pass occupies residues 197 to 218 (YHLVVFVLVYFLPLVVMFVAYS). Residues 219–251 (VIGLTLWKRAVPRHQAHGANLRHLHAKKKFVKA) are Cytoplasmic-facing. The chain crosses the membrane as a helical span at residues 252–272 (MVLVVLTFAICWLPYHLYFIL). Topologically, residues 273-290 (GSFQKDIYYRKFIQQVYL) are extracellular. The helical transmembrane segment at 291–310 (ALFWLAMSSTMYNPIIYCCL) threads the bilayer. Residues 311 to 384 (NHRFRSGFRL…SPQDVEPAAP (74 aa)) lie on the Cytoplasmic side of the membrane. Cysteine 324 carries the S-palmitoyl cysteine lipid modification.

Belongs to the G-protein coupled receptor 1 family.

The protein localises to the cell membrane. This is a receptor for the tachykinin neuropeptide substance K (neurokinin A). It is associated with G proteins that activate a phosphatidylinositol-calcium second messenger system. The rank order of affinity of this receptor to tachykinins is: substance K &gt; neuromedin-K &gt; substance P. The chain is Substance-K receptor (TACR2) from Mesocricetus auratus (Golden hamster).